Here is a 199-residue protein sequence, read N- to C-terminus: Imidazole glycerol phosphate synthase subunit HisH (199 aa).

One can recognise a Glutamine amidotransferase type-1 domain in the interval 3–199 (NITIIDTGCA…LKNFVEKVPF (197 aa)). Residue Cys78 is the Nucleophile of the active site. Catalysis depends on residues His178 and Glu180.

Heterodimer of HisH and HisF.

The protein localises to the cytoplasm. It carries out the reaction 5-[(5-phospho-1-deoxy-D-ribulos-1-ylimino)methylamino]-1-(5-phospho-beta-D-ribosyl)imidazole-4-carboxamide + L-glutamine = D-erythro-1-(imidazol-4-yl)glycerol 3-phosphate + 5-amino-1-(5-phospho-beta-D-ribosyl)imidazole-4-carboxamide + L-glutamate + H(+). It catalyses the reaction L-glutamine + H2O = L-glutamate + NH4(+). Its pathway is amino-acid biosynthesis; L-histidine biosynthesis; L-histidine from 5-phospho-alpha-D-ribose 1-diphosphate: step 5/9. Its function is as follows. IGPS catalyzes the conversion of PRFAR and glutamine to IGP, AICAR and glutamate. The HisH subunit catalyzes the hydrolysis of glutamine to glutamate and ammonia as part of the synthesis of IGP and AICAR. The resulting ammonia molecule is channeled to the active site of HisF. The polypeptide is Imidazole glycerol phosphate synthase subunit HisH (hisH) (Haemophilus influenzae (strain ATCC 51907 / DSM 11121 / KW20 / Rd)).